Consider the following 358-residue polypeptide: DNA-directed RNA polymerase subunit alpha (358 aa).

Positions 1-231 (MIQNVTDDKI…NIFLSLSNSS (231 aa)) are alpha N-terminal domain (alpha-NTD). An alpha C-terminal domain (alpha-CTD) region spans residues 266–358 (QESLGWKKIS…LELINNKDIS (93 aa)).

This sequence belongs to the RNA polymerase alpha chain family. In plastids the minimal PEP RNA polymerase catalytic core is composed of four subunits: alpha, beta, beta', and beta''. When a (nuclear-encoded) sigma factor is associated with the core the holoenzyme is formed, which can initiate transcription.

The protein localises to the plastid. It is found in the chloroplast. It catalyses the reaction RNA(n) + a ribonucleoside 5'-triphosphate = RNA(n+1) + diphosphate. Its function is as follows. DNA-dependent RNA polymerase catalyzes the transcription of DNA into RNA using the four ribonucleoside triphosphates as substrates. This chain is DNA-directed RNA polymerase subunit alpha, found in Chara vulgaris (Common stonewort).